A 411-amino-acid chain; its full sequence is MQSWSSAPVPIVPGREPELRLYDTADRQVRPVAPGNTATMYVCGITPYDATHLGHAATYLAFDLIHRLWLDLGHEVRYVQNVTDVDDPLFERADRDGVDWRDLAAQEVALFREDMAALRVLSPHDYVGATEAVAEIIELVEKLLASGAAYVLDGEHPDVYYRSDATLQFGYESGYDRDTMLGLFEQRGGDPGRPGKNDALDALLWRAARPGEPSWPSPFGPGRPGWHIECAAIALSRVGSGLDVQGGGSDLIFPHHEFTAAHAECVTGEQRFARHYVHAGMIGWDGHKMSKSRGNLVLVSGLRAEGVNPAAVRLGLLAGHYRADRFWSQQVLDEAVGRLQRWRAATTLPAGPDAAAVVARVRQYLADDLNTPKAIAALDGWATDALDYGGHDEVAPRLVASTIDALLGVDL.

C43 contacts Zn(2+). L-cysteinyl-5'-AMP contacts are provided by residues C43–T46, T58, and N81–T83. The 'HIGH' region motif lies at I45–H55. Positions Q186 to P191 match the 'ERGGDP' region motif. Position 226 (W226) interacts with L-cysteinyl-5'-AMP. C230 contributes to the Zn(2+) binding site. G248–D250 contributes to the L-cysteinyl-5'-AMP binding site. Position 255 (H255) interacts with Zn(2+). An L-cysteinyl-5'-AMP-binding site is contributed by I282. Residues K288–S292 carry the 'KMSKS' region motif.

Belongs to the class-I aminoacyl-tRNA synthetase family. MshC subfamily. As to quaternary structure, monomer. Zn(2+) serves as cofactor.

The enzyme catalyses 1D-myo-inositol 2-amino-2-deoxy-alpha-D-glucopyranoside + L-cysteine + ATP = 1D-myo-inositol 2-(L-cysteinylamino)-2-deoxy-alpha-D-glucopyranoside + AMP + diphosphate + H(+). Functionally, catalyzes the ATP-dependent condensation of GlcN-Ins and L-cysteine to form L-Cys-GlcN-Ins. This Mycobacterium ulcerans (strain Agy99) protein is L-cysteine:1D-myo-inositol 2-amino-2-deoxy-alpha-D-glucopyranoside ligase.